The chain runs to 492 residues: Dipeptide permease D (492 aa).

Transmembrane regions (helical) follow at residues 14–34, 49–69, 91–111, 138–158, 167–187, 212–232, 236–256, 269–289, 312–332, 344–364, 379–399, 413–433, and 458–478; these read VVAL…LLIL, ALFS…GYLA, LVLG…AIIV, GGFS…PIAC, WAMG…IFLC, NWGW…VLFW, SVYA…RIYL, LIVV…QGGS, MFQS…AWLV, IWGK…ILTL, LMVL…PVAM, VLTG…AGVI, and VFSQ…VIWL.

This sequence belongs to the major facilitator superfamily. Proton-dependent oligopeptide transporter (POT/PTR) (TC 2.A.17) family. DtpD subfamily.

The protein localises to the cell inner membrane. Functionally, probable proton-dependent permease that transports dipeptides. The chain is Dipeptide permease D from Klebsiella pneumoniae subsp. pneumoniae (strain ATCC 700721 / MGH 78578).